Reading from the N-terminus, the 134-residue chain is Small ribosomal subunit protein uS9 (134 aa).

Residues 114–134 (QKEAKNFGGPGARSKYQKSYR) are disordered.

This sequence belongs to the universal ribosomal protein uS9 family.

This Methanosarcina mazei (strain ATCC BAA-159 / DSM 3647 / Goe1 / Go1 / JCM 11833 / OCM 88) (Methanosarcina frisia) protein is Small ribosomal subunit protein uS9.